Reading from the N-terminus, the 59-residue chain is U-actitoxin-Aer2a (59 aa).

Post-translationally, contains 5 disulfide bonds.

It is found in the secreted. Its subcellular location is the nematocyst. In Anemonia erythraea (Sea anemone), this protein is U-actitoxin-Aer2a.